The chain runs to 206 residues: Large ribosomal subunit protein bL25 (206 aa).

A bL25 domain region spans residues 1-91; it reads MEYRLKAYYR…RPEHVDFFVL (91 aa). Residues 92-206 are CTC domain; that stretch reads SDEPVEMYVP…IKKGKEEEEE (115 aa). A disordered region spans residues 184 to 206; it reads AEEAAAEVAEPEVIKKGKEEEEE. Positions 195–206 are enriched in basic and acidic residues; sequence EVIKKGKEEEEE.

Belongs to the bacterial ribosomal protein bL25 family. CTC subfamily. In terms of assembly, part of the 50S ribosomal subunit. Contacts the 5S rRNA.

This is one of 3 proteins that mediate the attachment of the 5S rRNA onto the large ribosomal subunit. The polypeptide is Large ribosomal subunit protein bL25 (rplY) (Thermus thermophilus).